We begin with the raw amino-acid sequence, 631 residues long: ATP-dependent zinc metalloprotease FtsH (631 aa).

Residues 1–5 are Cytoplasmic-facing; the sequence is MKKSN. The helical transmembrane segment at 6 to 26 threads the bilayer; the sequence is PWFVFFWITLLVIVLMFINFA. Topologically, residues 27-102 are periplasmic; the sequence is RQGGNEVELE…LEFSATEKSG (76 aa). The chain crosses the membrane as a helical span at residues 103-123; that stretch reads WLGSLLLNWGPVVLLILFCFW. Residues 124-631 are Cytoplasmic-facing; it reads MMRGMSMGNK…KVINEKVIIS (508 aa). An ATP-binding site is contributed by 196–203; that stretch reads GSPGTGKT. His-418 is a binding site for Zn(2+). Glu-419 is an active-site residue. 2 residues coordinate Zn(2+): His-422 and Asp-494.

In the central section; belongs to the AAA ATPase family. The protein in the C-terminal section; belongs to the peptidase M41 family. In terms of assembly, homohexamer. It depends on Zn(2+) as a cofactor.

The protein localises to the cell inner membrane. In terms of biological role, acts as a processive, ATP-dependent zinc metallopeptidase for both cytoplasmic and membrane proteins. Plays a role in the quality control of integral membrane proteins. In Endomicrobium trichonymphae, this protein is ATP-dependent zinc metalloprotease FtsH.